The primary structure comprises 880 residues: Alanine--tRNA ligase (880 aa).

Zn(2+) contacts are provided by histidine 567, histidine 571, cysteine 669, and histidine 673.

It belongs to the class-II aminoacyl-tRNA synthetase family. Requires Zn(2+) as cofactor.

The protein resides in the cytoplasm. It carries out the reaction tRNA(Ala) + L-alanine + ATP = L-alanyl-tRNA(Ala) + AMP + diphosphate. Its function is as follows. Catalyzes the attachment of alanine to tRNA(Ala) in a two-step reaction: alanine is first activated by ATP to form Ala-AMP and then transferred to the acceptor end of tRNA(Ala). Also edits incorrectly charged Ser-tRNA(Ala) and Gly-tRNA(Ala) via its editing domain. The protein is Alanine--tRNA ligase of Bacillus thuringiensis (strain Al Hakam).